We begin with the raw amino-acid sequence, 469 residues long: Transcription factor phomD' (469 aa).

A DNA-binding region (zn(2)-C6 fungal-type) is located at residues 14–41 (CNACNESKVRCSQRKPTCARCERNGVEC). Residues 49-118 (THKDAPPISM…QQKDEAAAAA (70 aa)) form a disordered region. The segment covering 82–93 (KANSNSSSNWHM) has biased composition (polar residues). Over residues 104 to 118 (QQQQQQQKDEAAAAA) the composition is skewed to low complexity.

The protein resides in the nucleus. In terms of biological role, transcription factor; part of the gene cluster that mediates the biosynthesis of the phomopsins, a group of hexapeptide mycotoxins which infects lupins and causes lupinosis disease in livestock. May play a role in the regulation of the production of phomopsins. In Diaporthe leptostromiformis (Lupinosis disease fungus), this protein is Transcription factor phomD'.